Reading from the N-terminus, the 274-residue chain is Thymidylate synthase (274 aa).

Arginine 21 lines the dUMP pocket. Histidine 51 lines the (6R)-5,10-methylene-5,6,7,8-tetrahydrofolate pocket. Residue 123–124 participates in dUMP binding; that stretch reads RR. The Nucleophile role is filled by cysteine 156. Residues 176–179, asparagine 187, and 217–219 contribute to the dUMP site; these read RSAD and HIY. Aspartate 179 contributes to the (6R)-5,10-methylene-5,6,7,8-tetrahydrofolate binding site. Serine 273 contributes to the (6R)-5,10-methylene-5,6,7,8-tetrahydrofolate binding site.

This sequence belongs to the thymidylate synthase family. Bacterial-type ThyA subfamily. As to quaternary structure, homodimer.

It is found in the cytoplasm. The catalysed reaction is dUMP + (6R)-5,10-methylene-5,6,7,8-tetrahydrofolate = 7,8-dihydrofolate + dTMP. It functions in the pathway pyrimidine metabolism; dTTP biosynthesis. In terms of biological role, catalyzes the reductive methylation of 2'-deoxyuridine-5'-monophosphate (dUMP) to 2'-deoxythymidine-5'-monophosphate (dTMP) while utilizing 5,10-methylenetetrahydrofolate (mTHF) as the methyl donor and reductant in the reaction, yielding dihydrofolate (DHF) as a by-product. This enzymatic reaction provides an intracellular de novo source of dTMP, an essential precursor for DNA biosynthesis. In Francisella tularensis subsp. holarctica (strain FTNF002-00 / FTA), this protein is Thymidylate synthase.